A 355-amino-acid chain; its full sequence is Protein ATP1B4 (355 aa).

Topologically, residues 1-108 (MRRQLRSRRA…SLARTGQSLS (108 aa)) are nuclear. The segment at 35–76 (EEEEAEEARVMVVPDLEEEEKEEEEEKEEDEKEEEESHHQDT) is disordered. A compositionally biased stretch (acidic residues) spans 49 to 68 (DLEEEEKEEEEEKEEDEKEE). The chain crosses the membrane as a helical; Signal-anchor for type II membrane protein span at residues 109-129 (LLLVIYFFFYASLAAVITLCM). The Perinuclear space portion of the chain corresponds to 130 to 355 (YTLFLTISPY…RVIFTLNIET (226 aa)).

This sequence belongs to the X(+)/potassium ATPases subunit beta family. As to quaternary structure, associates with a SMAD7-transcriptional complex. Interacts with SNW1 and TOR1AIP1. Does not associate with known Na,K-ATPase alpha-subunits. As to expression, expressed in skeletal muscle (at protein level). Expressed during postnatal development in skeletal muscle and heart.

The protein resides in the nucleus inner membrane. May act as a transcriptional coregulator during muscle development through its interaction with SNW1. Has lost its ancestral function as a Na,K-ATPase beta-subunit. The chain is Protein ATP1B4 (ATP1B4) from Sus scrofa (Pig).